The primary structure comprises 214 residues: ATP-dependent Clp protease proteolytic subunit (214 aa).

Ser110 (nucleophile) is an active-site residue. The active site involves His135.

The protein belongs to the peptidase S14 family. Fourteen ClpP subunits assemble into 2 heptameric rings which stack back to back to give a disk-like structure with a central cavity, resembling the structure of eukaryotic proteasomes.

The protein resides in the cytoplasm. It carries out the reaction Hydrolysis of proteins to small peptides in the presence of ATP and magnesium. alpha-casein is the usual test substrate. In the absence of ATP, only oligopeptides shorter than five residues are hydrolyzed (such as succinyl-Leu-Tyr-|-NHMec, and Leu-Tyr-Leu-|-Tyr-Trp, in which cleavage of the -Tyr-|-Leu- and -Tyr-|-Trp bonds also occurs).. Its function is as follows. Cleaves peptides in various proteins in a process that requires ATP hydrolysis. Has a chymotrypsin-like activity. Plays a major role in the degradation of misfolded proteins. The sequence is that of ATP-dependent Clp protease proteolytic subunit from Legionella pneumophila (strain Corby).